A 168-amino-acid chain; its full sequence is Photosystem I assembly protein Ycf3 (168 aa).

TPR repeat units follow at residues 35–68 (AFTY…EIDP), 72–105 (SYIL…NPFL), and 120–153 (GEQA…TPGN).

The protein belongs to the Ycf3 family.

Its subcellular location is the plastid. The protein resides in the chloroplast thylakoid membrane. Essential for the assembly of the photosystem I (PSI) complex. May act as a chaperone-like factor to guide the assembly of the PSI subunits. In Helianthus annuus (Common sunflower), this protein is Photosystem I assembly protein Ycf3.